A 332-amino-acid chain; its full sequence is Transcription initiation factor IIB 2 (332 aa).

Polar residues predominate over residues 1–10 (MSDTITTRTY). The interval 1-36 (MSDTITTRTYSADAKSRDVRPRESERDETQQDETQV) is disordered. Residues 14 to 29 (AKSRDVRPRESERDET) are compositionally biased toward basic and acidic residues. The TFIIB-type zinc-finger motif lies at 33–63 (ETQVCPECSGHLVTDEEHGETICEDCGLVVE). Residues Cys-37, Cys-40, Cys-55, and Cys-58 each coordinate Zn(2+). The interval 77 to 106 (DSAERDSKSRVGAPTTKMMHDKGLSTNIGW) is disordered. A run of 2 repeats spans residues 149-232 (GEID…VREL) and 243-324 (QYVP…ELLE).

This sequence belongs to the TFIIB family.

Its function is as follows. Stabilizes TBP binding to an archaeal box-A promoter. Also responsible for recruiting RNA polymerase II to the pre-initiation complex (DNA-TBP-TFIIB). The polypeptide is Transcription initiation factor IIB 2 (Haloferax volcanii (strain ATCC 29605 / DSM 3757 / JCM 8879 / NBRC 14742 / NCIMB 2012 / VKM B-1768 / DS2) (Halobacterium volcanii)).